The following is a 73-amino-acid chain: uncharacterized protein (73 aa).

This is an uncharacterized protein from Dictyostelium discoideum (Social amoeba).